Here is a 131-residue protein sequence, read N- to C-terminus: Small ribosomal subunit protein eS17A (131 aa).

This sequence belongs to the eukaryotic ribosomal protein eS17 family. Component of the small ribosomal subunit (SSU). Mature yeast ribosomes consist of a small (40S) and a large (60S) subunit. The 40S small subunit contains 1 molecule of ribosomal RNA (18S rRNA) and at least 33 different proteins. The large 60S subunit contains 3 rRNA molecules (25S, 5.8S and 5S rRNA) and at least 46 different proteins.

The protein resides in the cytoplasm. Its function is as follows. Component of the ribosome, a large ribonucleoprotein complex responsible for the synthesis of proteins in the cell. The small ribosomal subunit (SSU) binds messenger RNAs (mRNAs) and translates the encoded message by selecting cognate aminoacyl-transfer RNA (tRNA) molecules. The large subunit (LSU) contains the ribosomal catalytic site termed the peptidyl transferase center (PTC), which catalyzes the formation of peptide bonds, thereby polymerizing the amino acids delivered by tRNAs into a polypeptide chain. The nascent polypeptides leave the ribosome through a tunnel in the LSU and interact with protein factors that function in enzymatic processing, targeting, and the membrane insertion of nascent chains at the exit of the ribosomal tunnel. The chain is Small ribosomal subunit protein eS17A (rps1701) from Schizosaccharomyces pombe (strain 972 / ATCC 24843) (Fission yeast).